The following is a 188-amino-acid chain: Peptidyl-tRNA hydrolase (188 aa).

Tyr17 contributes to the tRNA binding site. His22 (proton acceptor) is an active-site residue. TRNA is bound by residues Tyr65, Asn67, and Asn113.

The protein belongs to the PTH family. As to quaternary structure, monomer.

Its subcellular location is the cytoplasm. It carries out the reaction an N-acyl-L-alpha-aminoacyl-tRNA + H2O = an N-acyl-L-amino acid + a tRNA + H(+). Its function is as follows. Hydrolyzes ribosome-free peptidyl-tRNAs (with 1 or more amino acids incorporated), which drop off the ribosome during protein synthesis, or as a result of ribosome stalling. In terms of biological role, catalyzes the release of premature peptidyl moieties from peptidyl-tRNA molecules trapped in stalled 50S ribosomal subunits, and thus maintains levels of free tRNAs and 50S ribosomes. In Mycoplasma pneumoniae (strain ATCC 29342 / M129 / Subtype 1) (Mycoplasmoides pneumoniae), this protein is Peptidyl-tRNA hydrolase.